The following is a 324-amino-acid chain: Homeobox protein engrailed-2 (324 aa).

Disordered regions lie at residues 1–59, 89–174, and 215–240; these read MEEK…HQHP, GGAR…VLKA, and DRPSSGPRSRKPKKKNPNKEDKRPRT. Positions 89-110 are enriched in gly residues; the sequence is GGARGGEGGAGTTEGGGGGAGG. The segment at residues 235–294 is a DNA-binding region (homeobox); that stretch reads DKRPRTAFTAEQLQRLKAEFQTNRYLTEQRRQSLAQELSLNESQIKIWFQNKRAKIKKAT.

It belongs to the engrailed homeobox family. Cerebellar granule cells.

Its subcellular location is the nucleus. The polypeptide is Homeobox protein engrailed-2 (En2) (Mus musculus (Mouse)).